Consider the following 327-residue polypeptide: Fructose-1,6-bisphosphatase class 1 (327 aa).

The Mg(2+) site is built by Glu84, Asp103, Leu105, and Asp106. Substrate is bound by residues 106 to 109 (DGSS), Asn198, and Lys264. Glu270 is a binding site for Mg(2+).

This sequence belongs to the FBPase class 1 family. In terms of assembly, homotetramer. Mg(2+) is required as a cofactor.

It is found in the cytoplasm. The catalysed reaction is beta-D-fructose 1,6-bisphosphate + H2O = beta-D-fructose 6-phosphate + phosphate. It participates in carbohydrate biosynthesis; gluconeogenesis. The chain is Fructose-1,6-bisphosphatase class 1 from Psychrobacter cryohalolentis (strain ATCC BAA-1226 / DSM 17306 / VKM B-2378 / K5).